We begin with the raw amino-acid sequence, 126 residues long: Calcitonin receptor-stimulating peptide 1 (126 aa).

The N-terminal stretch at 1-25 (MGFWKFPPFLVLSILVLYQAGMFHT) is a signal peptide. Residues 26–78 (APMRSAFGSPFDPATLSEEESRLLLAAMVNDYEQMKAREMQKQRAQGSGISVQ) constitute a propeptide that is removed on maturation. Cys82 and Cys87 are disulfide-bonded. A Glycine amide modification is found at Gly118. Residues 123-126 (NFWI) constitute a propeptide that is removed on maturation.

As to expression, mainly expressed in the thyroid gland and CNS. Found in the nerve cells of cerebrum, hippocampus, hypothalamus, pons/midbrain and thalamus.

Its subcellular location is the secreted. In terms of biological role, stimulates cAMP production in porcine kidney cell line LLC-PK1 via the calcitonin receptor (CT) but not via the CT-like (CL) receptor. This is Calcitonin receptor-stimulating peptide 1 (CRSP1) from Sus scrofa (Pig).